Consider the following 556-residue polypeptide: Tripartite motif-containing protein 16 (556 aa).

A disordered region spans residues 1–60; that stretch reads MAELDLIAPGPLTGVTAHPLAPLGPDPVSAIPVEKEDADPLSKSGEETQEQGHDPAELGA. The span at 33 to 56 shows a compositional bias: basic and acidic residues; sequence VEKEDADPLSKSGEETQEQGHDPA. 2 consecutive B box-type zinc fingers follow at residues 64–113 and 117–156; these read EDQI…LTEP and QDLR…STVS. Ser107 is subject to Phosphoserine. 2 coiled-coil regions span residues 163-266 and 312-332; these read NKEV…RLAA and NLIQ…REEE. Ser195 carries the post-translational modification Phosphoserine. Residues 347–545 enclose the B30.2/SPRY domain; sequence YRTSKPEPRT…RIVDLGEEPE (199 aa).

It belongs to the TRIM/RBCC family. Homodimerizes via its coiled-coil domain. Heterodimerizes with MID1, TRIM24 and PML. Interacts with Galectin-3/LGALS3 in a ULK1-dependent manner; this interaction mediates autophagy of damage endomembranes. Interacts with BECN1. Interacts with ATG16L1. Interacts with p62/SQSTM and LC3B/MAP1LC3B. In terms of processing, phosphorylated by ULK1. Auto-ubiquitinates via its B-Boxes. Widely expressed. Expressed in basal keratinocytes.

It is found in the cytoplasm. It carries out the reaction S-ubiquitinyl-[E2 ubiquitin-conjugating enzyme]-L-cysteine + [acceptor protein]-L-lysine = [E2 ubiquitin-conjugating enzyme]-L-cysteine + N(6)-ubiquitinyl-[acceptor protein]-L-lysine.. Its function is as follows. E3 ubiquitin ligase that plays an essential role in the organization of autophagic response and ubiquitination upon lysosomal and phagosomal damages. Plays a role in the stress-induced biogenesis and degradation of protein aggresomes by regulating the p62-KEAP1-NRF2 signaling and particularly by modulating the ubiquitination levels and thus stability of NRF2. Acts as a scaffold protein and facilitates autophagic degradation of protein aggregates by interacting with p62/SQSTM, ATG16L1 and LC3B/MAP1LC3B. In turn, protects the cell against oxidative stress-induced cell death as a consequence of endomembrane damage. In Mus musculus (Mouse), this protein is Tripartite motif-containing protein 16 (Trim16).